The chain runs to 543 residues: MSSVLPTPVLPTPGRNINRGHFPDDFIFGAGTSSYQIEGAAREGGRGPSIWDTFTHTHPELIQDGSNGDTAINSYNLYKEDIKIVKLMGLDAYRFSISWPRILPGGSINAGINQEGIKYYNNLIDELLANDIVPYVTLFHWDVPQALQDQYDGFLSDKIVDDFRDFAELCFWEFGDRVKNWITINEPQSYSDFFGVAYDTPPKAHALKASRLLVPTTVARPSKPVRVFASTADPGTTTADQVYKVGHNLLLAHAAAIQVYRDKFQNTQEGTFGMALVTQWMKPLNENNPADVEAASRAFDFKFGWFMQPLITGEYPKSMRQLLGPRLREFTPDQKKLLIGSYDYVGVNYYTATYVSSAQPPHDKKKAVFHTDGNFYTTDSKDGVLIGPLAGPAWLNIVPEGIYHVLHDIKENYEDPVIYITENGVYEVNDTAKTLSEARVDTTRLHYLQDHLSKVLEARHQGVRVQGYLVWSLMDNWELRAGYTSRFGLIHVDYYNNFARYPKDSAIWFRNAFHKRLRIHVNKARPQEDDGAFDTPRKRLRKY.

A beta-D-glucoside-binding positions include glutamine 36, histidine 140, 185 to 186 (NE), tyrosine 350, glutamate 422, tryptophan 471, and phenylalanine 487. Glutamate 186 (proton donor) is an active-site residue. Glutamate 422 functions as the Nucleophile in the catalytic mechanism.

The protein belongs to the glycosyl hydrolase 1 family.

The protein resides in the cytoplasm. It localises to the cytosol. The enzyme catalyses deacetylipecoside + H2O = deacetylipecoside aglycone + D-glucose. The catalysed reaction is deacetylisoipecoside + H2O = deacetylisoipecoside aglycone + D-glucose. It functions in the pathway alkaloid biosynthesis. Beta-glucosidase catalyzing deglucosylation on N-deacetylisoipecoside and N-deacetylipecoside. This is Ipecac alkaloid beta-glucosidase 3 from Carapichea ipecacuanha (Ipecac).